The following is a 246-amino-acid chain: Probable transcriptional regulatory protein YebC (246 aa).

Residues 1-20 (MAGHSKWANTRHRKAAQDAK) are disordered.

Belongs to the TACO1 family.

The protein resides in the cytoplasm. The protein is Probable transcriptional regulatory protein YebC of Salmonella choleraesuis (strain SC-B67).